The following is a 469-amino-acid chain: Crinkler effector protein 1 (469 aa).

Positions 1–17 (MSITLLCLIKGNTLANA) are cleaved as a signal peptide. The segment at 18-57 (FPVDIDKDQLVGHLKKVIKAEQPQTFANVDAKDLKLWRVP) is LQLFLAK-like domain. Residues 58-96 (ISDDHDDQLRNLSLEDSDELLAIRKISKYFPDSPPEECI) are DWL domain. The N-linked (GlcNAc...) asparagine glycan is linked to Asn-68. The HVLVXXP motif motif lies at 97 to 103 (HVLVEPP). N-linked (GlcNAc...) asparagine glycosylation is found at Asn-126, Asn-181, and Asn-248.

Belongs to the Crinkler effector family. In terms of assembly, homodimer.

The protein localises to the secreted. The protein resides in the host nucleus. Functionally, effector that participates in the arbuscule development step of the symbiosis. Arbuscular mycorrhizal (AM) symbiosis is one of the most prominent and beneficial plant-microbe interactions that facilitates mineral nutrition and confers tolerance to biotic and abiotic stresses. Is not involved in cell death processes. This is Crinkler effector protein 1 from Rhizophagus irregularis (strain DAOM 181602 / DAOM 197198 / MUCL 43194) (Arbuscular mycorrhizal fungus).